The chain runs to 349 residues: Nicotinate-nucleotide--dimethylbenzimidazole phosphoribosyltransferase (349 aa).

Catalysis depends on E313, which acts as the Proton acceptor.

The protein belongs to the CobT family.

The catalysed reaction is 5,6-dimethylbenzimidazole + nicotinate beta-D-ribonucleotide = alpha-ribazole 5'-phosphate + nicotinate + H(+). The protein operates within nucleoside biosynthesis; alpha-ribazole biosynthesis; alpha-ribazole from 5,6-dimethylbenzimidazole: step 1/2. In terms of biological role, catalyzes the synthesis of alpha-ribazole-5'-phosphate from nicotinate mononucleotide (NAMN) and 5,6-dimethylbenzimidazole (DMB). This Mycobacterium avium (strain 104) protein is Nicotinate-nucleotide--dimethylbenzimidazole phosphoribosyltransferase.